The sequence spans 157 residues: Class I hydrophobin rodA (157 aa).

Positions 1 to 41 (MKFSIAAAVVAFAASVAALPPAHDSQFAGNGVGNKGNSNVK) are cleaved as a signal peptide. N-linked (GlcNAc...) asparagine glycosylation is present at Asn47. 4 disulfide bridges follow: Cys57–Cys131, Cys65–Cys125, Cys66–Cys106, and Cys132–Cys150.

It belongs to the fungal hydrophobin family. In terms of assembly, self-assembles to form functional amyloid fibrils called rodlets. Self-assembly into fibrillar rodlets occurs spontaneously at hydrophobic:hydrophilic interfaces and the rodlets further associate laterally to form amphipathic monolayers.

The protein localises to the secreted. It localises to the spore wall. Aerial growth, conidiation, and dispersal of filamentous fungi in the environment rely upon a capability of their secreting small amphipathic proteins called hydrophobins (HPBs) with low sequence identity. Class I can self-assemble into an outermost layer of rodlet bundles on aerial cell surfaces, conferring cellular hydrophobicity that supports fungal growth, development and dispersal; whereas Class II form highly ordered films at water-air interfaces through intermolecular interactions but contribute nothing to the rodlet structure. RodA is a class I hydrophobin that contributes to surface hydrophobicity, which is important for processes such as association of hyphae in reproductive structures, dispersal of aerial spores and adhesion of pathogens to host structures. Important for the formation of hydrophobic rodlet layers of asexually-produced spores. Promotes also biofilm formation and may enhance lignocellulose utilization via promoting a compact substrate-enzyme-fungus structure. The protein is Class I hydrophobin rodA of Emericella nidulans (strain FGSC A4 / ATCC 38163 / CBS 112.46 / NRRL 194 / M139) (Aspergillus nidulans).